We begin with the raw amino-acid sequence, 252 residues long: uncharacterized protein (252 aa).

This sequence belongs to the methyltransferase superfamily.

This is an uncharacterized protein from Mycobacterium sp. (strain KMS).